Here is an 816-residue protein sequence, read N- to C-terminus: Metabotropic glutamate receptor-like protein E (816 aa).

A signal peptide spans 1–27 (MKIKIGNILKNVVILVIFSLFISKINS). The Extracellular portion of the chain corresponds to 28 to 436 (EVVKPNPAKP…QVVVFDRTLN (409 aa)). Residues N68, N311, and N388 are each glycosylated (N-linked (GlcNAc...) asparagine). A helical transmembrane segment spans residues 437 to 457 (IVLGVITGVCVLIVIGIGSVI). The Cytoplasmic segment spans residues 458-469 (ALQWRKFRYSSP). Residues 470–490 (LFCMFIIIGALMGLASVFTLL) traverse the membrane as a helical segment. The Extracellular portion of the chain corresponds to 491–496 (PTPTTP). A helical transmembrane segment spans residues 497 to 517 (LCSGFPWLLGLGYVIVFGTLF). The Cytoplasmic portion of the chain corresponds to 518–541 (TKTWRTWRLFSNARKFKIIRITNK). Residues 542–562 (FIITLVGGFVLLESIFMIIWT) form a helical membrane-spanning segment. The Extracellular portion of the chain corresponds to 563 to 590 (AVDRPIPLAEPIFKAGEAQLQCTSDSEA). Residues 591 to 611 (WWYVFVFYKVFYILFGVFLAF) traverse the membrane as a helical segment. Topologically, residues 612–625 (KTRNVVDSLNESKP) are cytoplasmic. The helical transmembrane segment at 626–646 (ITLALYNLTFVMVVAIALGFI) threads the bilayer. The Extracellular segment spans residues 647–653 (LRDNPIA). Residues 654 to 674 (IIVIQTIAILLGFTVTVSVLF) traverse the membrane as a helical segment. At 675–816 (LPKVWMILSG…KKKKKKNNNK (142 aa)) the chain is on the cytoplasmic side. Residues 697 to 718 (DSMGRSNGNTTEAESTRGYTNK) are disordered.

This sequence belongs to the G-protein coupled receptor 3 family.

The protein localises to the membrane. In terms of biological role, may be involved in early development in cAMP sensing and subsequent chemotactic response. Probable receptor of GABA and glutamate, leading respectively to the induction or inhibition of SDF-2 formation. This Dictyostelium discoideum (Social amoeba) protein is Metabotropic glutamate receptor-like protein E (grlE).